The primary structure comprises 92 residues: Acylphosphatase (92 aa).

Residues 3-90 (RVHVLVAGRV…GEFTEFAVLR (88 aa)) enclose the Acylphosphatase-like domain. Active-site residues include Arg-18 and Asn-36.

This sequence belongs to the acylphosphatase family.

It carries out the reaction an acyl phosphate + H2O = a carboxylate + phosphate + H(+). The chain is Acylphosphatase (acyP) from Methylococcus capsulatus (strain ATCC 33009 / NCIMB 11132 / Bath).